Here is a 124-residue protein sequence, read N- to C-terminus: Ribosome-binding factor A (124 aa).

The protein belongs to the RbfA family. In terms of assembly, monomer. Binds 30S ribosomal subunits, but not 50S ribosomal subunits or 70S ribosomes.

It is found in the cytoplasm. Its function is as follows. One of several proteins that assist in the late maturation steps of the functional core of the 30S ribosomal subunit. Associates with free 30S ribosomal subunits (but not with 30S subunits that are part of 70S ribosomes or polysomes). Required for efficient processing of 16S rRNA. May interact with the 5'-terminal helix region of 16S rRNA. This is Ribosome-binding factor A from Thiobacillus denitrificans (strain ATCC 25259 / T1).